The chain runs to 95 residues: MPKLAVVLLVLLILPLSYFDVAGGQAAEGDRRGNGLARYPQRGGRDNEAECQINTPGSSWGKCCMTRMCGTMCCARSGCTCVYHWRRGHGCSCPG.

An N-terminal signal peptide occupies residues 1–24 (MPKLAVVLLVLLILPLSYFDVAGG). The propeptide occupies 25-45 (QAAEGDRRGNGLARYPQRGGR). Position 50 is a 4-carboxyglutamate (Glu50). A 4-hydroxyproline modification is found at Pro56. Disulfide bonds link Cys64/Cys73, Cys69/Cys81, Cys74/Cys91, and Cys79/Cys93.

This sequence belongs to the conotoxin D superfamily. As to quaternary structure, hetero-, homo- or pseudo-homodimer (identical sequence, different post-translational modifications). Heterodimer of [carboxy'Glu-48', hydroxy'Pro-54']Ms20.1 and [carboxyGlu-50, hydroxyPro-56]Ms20.4 may exist. Expressed by the venom duct.

The protein resides in the secreted. Its function is as follows. Alpha-conotoxins act on postsynaptic membranes, they bind to the nicotinic acetylcholine receptors (nAChR) and thus inhibit them. Through its two C-terminal domains, this homodimeric protein would bind to two nAChR allosteric sites, located outside the nAChR C-loop of the principal binding face and at the adjacent binding interface in a clockwise direction. This toxin specifically blocks mammalian neuronal nAChR of the alpha-7/CHRNA7, alpha-3-beta-2/CHRNA3-CHRNB2 and alpha-4-beta-2/CHRNA4-CHRNB2 subtypes. This is Alpha-conotoxin-like Ms20.4 from Conus mustelinus (Weasel cone).